A 148-amino-acid polypeptide reads, in one-letter code: SsrA-binding protein (148 aa).

A disordered region spans residues 123–148 (KLHDKRETEKKRDWEREKARIMRSAT). The segment covering 126–142 (DKRETEKKRDWEREKAR) has biased composition (basic and acidic residues).

The protein belongs to the SmpB family.

Its subcellular location is the cytoplasm. Functionally, required for rescue of stalled ribosomes mediated by trans-translation. Binds to transfer-messenger RNA (tmRNA), required for stable association of tmRNA with ribosomes. tmRNA and SmpB together mimic tRNA shape, replacing the anticodon stem-loop with SmpB. tmRNA is encoded by the ssrA gene; the 2 termini fold to resemble tRNA(Ala) and it encodes a 'tag peptide', a short internal open reading frame. During trans-translation Ala-aminoacylated tmRNA acts like a tRNA, entering the A-site of stalled ribosomes, displacing the stalled mRNA. The ribosome then switches to translate the ORF on the tmRNA; the nascent peptide is terminated with the 'tag peptide' encoded by the tmRNA and targeted for degradation. The ribosome is freed to recommence translation, which seems to be the essential function of trans-translation. The chain is SsrA-binding protein from Burkholderia pseudomallei (strain 1710b).